We begin with the raw amino-acid sequence, 475 residues long: Legumain (475 aa).

An N-terminal signal peptide occupies residues 1–15 (MVMMLVMLSLHGTAA). A propeptide spanning residues 16 to 35 (RLNRREWDSVIQLPTEPVDD) is cleaved from the precursor. Histidine 158 is a catalytic residue. The Nucleophile role is filled by cysteine 200. The cysteines at positions 233 and 247 are disulfide-linked. Asparagine 300 carries N-linked (GlcNAc...) asparagine glycosylation. 2 disulfide bridges follow: cysteine 411/cysteine 441 and cysteine 423/cysteine 458.

It belongs to the peptidase C13 family. Homodimer.

The enzyme catalyses Hydrolysis of proteins and small molecule substrates at -Asn-|-Xaa- bonds.. Its activity is regulated as follows. Repressed by various protease inhibitors including p-chloromercuribenzene sulfonic acid (PCMBS), N-ethylmaleimide, kininogen, elastatinal, cystatin EW and leupeptin. In terms of biological role, asparaginyl endopeptidase able to cleave almost all peptide bonds on the carboxyl side of Asn residues, except at the NH2 terminus or second position or with N-glycosylated Asn. Responsible for the maturation (circular permutation) of concanavalin A from its precursor, by performing both cleavage and cleavage-coupled transpeptidation to form conA. The protein is Legumain of Canavalia ensiformis (Jack bean).